A 125-amino-acid polypeptide reads, in one-letter code: Large ribosomal subunit protein bL17 (125 aa).

Belongs to the bacterial ribosomal protein bL17 family. As to quaternary structure, part of the 50S ribosomal subunit. Contacts protein L32.

This is Large ribosomal subunit protein bL17 from Acinetobacter baumannii (strain AB0057).